Here is a 402-residue protein sequence, read N- to C-terminus: Elongation factor Tu (402 aa).

Residues 10–212 (KPHINIGTIG…AVDEYIPEPK (203 aa)) form the tr-type G domain. The tract at residues 19 to 26 (GHVDHGKT) is G1. 19-26 (GHVDHGKT) contributes to the GTP binding site. Thr-26 serves as a coordination point for Mg(2+). The segment at 60-64 (GITIA) is G2. The segment at 81-84 (DCPG) is G3. GTP contacts are provided by residues 81–85 (DCPGH) and 136–139 (NKED). A G4 region spans residues 136–139 (NKED). The tract at residues 177–179 (SAF) is G5.

Belongs to the TRAFAC class translation factor GTPase superfamily. Classic translation factor GTPase family. EF-Tu/EF-1A subfamily. In terms of assembly, monomer.

The protein resides in the cytoplasm. It catalyses the reaction GTP + H2O = GDP + phosphate + H(+). GTP hydrolase that promotes the GTP-dependent binding of aminoacyl-tRNA to the A-site of ribosomes during protein biosynthesis. This is Elongation factor Tu from Sulfurovum sp. (strain NBC37-1).